The primary structure comprises 312 residues: Tumor necrosis factor receptor type 1-associated DEATH domain protein (312 aa).

Positions Leu-147–Thr-163 match the Nuclear export signal motif. Residues Ser-166 to Gln-200 form a disordered region. A Death domain is found at Asn-215–Ala-305. The segment at Phe-222 to Leu-289 is interaction with KRT14 and KRT18. Residues Arg-231 to Leu-244 carry the Nuclear localization signal motif.

Stimulation of TNF-alpha receptor TNFRSF1A leads to the formation of two distinct signaling complexes. Plasma membrane-bound complex I is composed of TNFRSF1A, TRADD, RIPK1, TRAF2 and BIRC2/c-IAP1 or BIRC3 which interacts with CHUCK/IKK-alpha, IKBKB/IKK-beta and IKBKG/IKK-gamma promoting cell survival. Subsequently, TRADD, RIPK1 and TRAF2 dissociate from TNFRSF1A and form cytoplasmic complex II with FADD and caspase CASP8 promoting cell apoptosis. Within complex I, interacts with TNFRSF1A/TNFR1, TRAF2 and kinase RIPK1. Within complex I, interacts with TRPC4AP; the interaction promotes NF-kappa B activation. UXT1 associates with complex I; the interaction prevents the formation of complex II. Within complex I Interacts with scaffold protein DAB2IP. Interacts with autophagy receptor SQSTM1. Interacts with E3 ligase TRIP12. Interacts with kinase HIPK2. Interacts with keratin KRT14. Interacts with keratin KRT18. Interacts with keratins KRT16 and KRT17. Interacts with FADD. Interacts with TOMM70. Interacts with TMC8; the interaction impairs the formation of complex I and facilites complex II formation.

The protein resides in the nucleus. Its subcellular location is the cytoplasm. It localises to the cytoskeleton. Adapter molecule for TNFRSF1A/TNFR1 that specifically associates with the cytoplasmic domain of activated TNFRSF1A/TNFR1 mediating its interaction with FADD. Overexpression of TRADD leads to two major TNF-induced responses, apoptosis and activation of NF-kappa-B. The nuclear form acts as a tumor suppressor by preventing ubiquitination and degradation of isoform p19ARF/ARF of CDKN2A by TRIP12: acts by interacting with TRIP12, leading to disrupt interaction between TRIP12 and isoform p19ARF/ARF of CDKN2A. This Bos taurus (Bovine) protein is Tumor necrosis factor receptor type 1-associated DEATH domain protein.